The chain runs to 661 residues: Kyphoscoliosis peptidase (661 aa).

The interval 116–137 (GDKNGNMRPRQPGGKDAHAYPW) is disordered. Active-site residues include C225, H267, and D282.

This sequence belongs to the transglutaminase-like superfamily. Interacts with IGFN1 and FLNC. As to expression, specifically expressed in skeletal and cardiac muscle.

Its subcellular location is the cytoplasm. The protein resides in the cytoskeleton. It localises to the myofibril. The protein localises to the sarcomere. It is found in the z line. Its function is as follows. Probable cytoskeleton-associated protease required for normal muscle growth. Involved in function, maturation and stabilization of the neuromuscular junction. May act by cleaving muscle-specific proteins such as FLNC. The polypeptide is Kyphoscoliosis peptidase (Mus musculus (Mouse)).